A 463-amino-acid chain; its full sequence is Xanthine permease XanP (463 aa).

The next 12 helical transmembrane spans lie at 43-63, 71-91, 93-113, 126-146, 156-176, 192-212, 222-242, 260-280, 352-372, 379-399, 409-429, and 439-459; these read LLAM…ALGL, IISM…KAWG, VGSG…PLIM, PTMM…EMVI, IITP…LIQV, TFGA…IILL, VASL…MGML, LYYG…VFMI, GFVV…SGFV, VLGG…VRIV, ILII…PLIL, and LLSS…LIFP.

It belongs to the nucleobase:cation symporter-2 (NCS2) (TC 2.A.40) family.

The protein localises to the cell inner membrane. It carries out the reaction xanthine(in) + H(+)(in) = xanthine(out) + H(+)(out). Functionally, specific, proton motive force-dependent high-affinity transporter for xanthine. The chain is Xanthine permease XanP (xanP) from Escherichia coli O6:H1 (strain CFT073 / ATCC 700928 / UPEC).